A 501-amino-acid chain; its full sequence is Ribose import ATP-binding protein RbsA (501 aa).

2 consecutive ABC transporter domains span residues 5–241 (LSLE…VGRK) and 252–498 (LRND…TGGV). 37–44 (GENGAGKS) provides a ligand contact to ATP.

It belongs to the ABC transporter superfamily. Ribose importer (TC 3.A.1.2.1) family. As to quaternary structure, the complex is composed of an ATP-binding protein (RbsA), two transmembrane proteins (RbsC) and a solute-binding protein (RbsB).

The protein resides in the cell inner membrane. It carries out the reaction D-ribose(out) + ATP + H2O = D-ribose(in) + ADP + phosphate + H(+). In terms of biological role, part of the ABC transporter complex RbsABC involved in ribose import. Responsible for energy coupling to the transport system. The chain is Ribose import ATP-binding protein RbsA from Hahella chejuensis (strain KCTC 2396).